Consider the following 314-residue polypeptide: Tudor-interacting repair regulator protein (314 aa).

G2 is lipidated: N-myristoyl glycine.

It belongs to the Nudix hydrolase family. TIRR subfamily. As to quaternary structure, interacts (via the cytoplasmic part) with syndecan-4 (SDC4), but not with other syndecan proteins. In terms of processing, myristoylated in vitro; additional evidence is however required to confirm myristoylation in vivo. As to expression, ubiquitously expressed. Expressed in embryonic brain, eyes, gizzard, heart, intestine, kidney, liver, tibia and skin.

Its subcellular location is the nucleus. It localises to the cytoplasm. The protein resides in the cytoskeleton. The protein localises to the cell membrane. It is found in the cell junction. Its subcellular location is the focal adhesion. Key regulator of TP53BP1 required to stabilize TP53BP1 and regulate its recruitment to chromatin. This is Tudor-interacting repair regulator protein (NUDT16L1) from Gallus gallus (Chicken).